The chain runs to 269 residues: Type II iodothyronine deiodinase (269 aa).

At 1-7 the chain is on the lumenal side; it reads MGLLSVD. A helical; Signal-anchor for type III membrane protein transmembrane segment spans residues 8 to 28; sequence LLITLQILPWFFSNCLFLALY. At 29–269 the chain is on the cytoplasmic side; that stretch reads DSVVLLKHVI…RUVPTCELIM (241 aa). Selenocysteine 128 is a catalytic residue. Residues selenocysteine 128 and selenocysteine 261 are each a non-standard amino acid (selenocysteine).

Belongs to the iodothyronine deiodinase family. In terms of assembly, predominantly monomer. Can form homodimers but homodimerization is not essential for enzyme activity.

It is found in the endoplasmic reticulum membrane. It carries out the reaction 3,3',5-triiodo-L-thyronine + iodide + A + H(+) = L-thyroxine + AH2. The catalysed reaction is 3,3'-diiodo-L-thyronine + iodide + A + H(+) = 3,3',5'-triiodo-L-thyronine + AH2. It catalyses the reaction 3'-iodo-L-thyronine + iodide + A + H(+) = 3',5'-diiodo-L-thyronine + AH2. The enzyme catalyses 3,3'-diiodothyronamine + iodide + A + H(+) = 3,3',5'-triiodothyronamine + AH2. It carries out the reaction 3'-iodothyronamine + iodide + A + H(+) = 3',5'-diiodothyronamine + AH2. In terms of biological role, plays a crucial role in the metabolism of thyroid hormones (TH) and has specific roles in TH activation and inactivation by deiodination. Catalyzes the deiodination of L-thyroxine (T4) to 3,5,3'-triiodothyronine (T3), 3,3',5'-triiodothyronine (rT3) to 3,3'-diiodothyronine (3,3'-T2) and 3',5'-diiodothyronine (3',5'-T2) to 3'-monoiodothyronine (3'-T1) via outer-ring deiodination (ORD). Catalyzes the phenolic ring deiodinations of 3,3',5'-triiodothyronamine and 3',5'- diiodothyronamine. This Neoceratodus forsteri (Australian lungfish) protein is Type II iodothyronine deiodinase (dio2).